The sequence spans 163 residues: Transcription elongation factor GreB (163 aa).

A coiled-coil region spans residues 54 to 76 (GKRRMREIDRRIRFLTKRLEAAV).

The protein belongs to the GreA/GreB family. GreB subfamily.

In terms of biological role, necessary for efficient RNA polymerase transcription elongation past template-encoded arresting sites. The arresting sites in DNA have the property of trapping a certain fraction of elongating RNA polymerases that pass through, resulting in locked ternary complexes. Cleavage of the nascent transcript by cleavage factors such as GreA or GreB allows the resumption of elongation from the new 3'terminus. GreB releases sequences of up to 9 nucleotides in length. The chain is Transcription elongation factor GreB from Neisseria meningitidis serogroup A / serotype 4A (strain DSM 15465 / Z2491).